Here is a 222-residue protein sequence, read N- to C-terminus: ATP-dependent Clp protease proteolytic subunit (222 aa).

Catalysis depends on Ser125, which acts as the Nucleophile. His150 is a catalytic residue.

The protein belongs to the peptidase S14 family. Fourteen ClpP subunits assemble into 2 heptameric rings which stack back to back to give a disk-like structure with a central cavity, resembling the structure of eukaryotic proteasomes.

It localises to the cytoplasm. It catalyses the reaction Hydrolysis of proteins to small peptides in the presence of ATP and magnesium. alpha-casein is the usual test substrate. In the absence of ATP, only oligopeptides shorter than five residues are hydrolyzed (such as succinyl-Leu-Tyr-|-NHMec, and Leu-Tyr-Leu-|-Tyr-Trp, in which cleavage of the -Tyr-|-Leu- and -Tyr-|-Trp bonds also occurs).. Functionally, cleaves peptides in various proteins in a process that requires ATP hydrolysis. Has a chymotrypsin-like activity. Plays a major role in the degradation of misfolded proteins. The polypeptide is ATP-dependent Clp protease proteolytic subunit (Porphyromonas gingivalis (strain ATCC BAA-308 / W83)).